A 411-amino-acid chain; its full sequence is Flavohemoprotein (411 aa).

A Globin domain is found at 5–142 (TLSQETKQIV…IADVFIQVEK (138 aa)). His-89 serves as a coordination point for heme b. Catalysis depends on charge relay system residues Tyr-99 and Glu-141. Residues 153-411 (GGWREFRSFV…FGPAGTLASS (259 aa)) are reductase. Positions 156-267 (REFRSFVVEK…TAPAGDFTLQ (112 aa)) constitute an FAD-binding FR-type domain. FAD contacts are provided by residues Tyr-194 and 210–213 (RQYS). 280–285 (GVGITP) serves as a coordination point for NADP(+). Residue 401–404 (FFGP) coordinates FAD.

The protein belongs to the globin family. Two-domain flavohemoproteins subfamily. This sequence in the C-terminal section; belongs to the flavoprotein pyridine nucleotide cytochrome reductase family. Heme b serves as cofactor. Requires FAD as cofactor.

The enzyme catalyses 2 nitric oxide + NADPH + 2 O2 = 2 nitrate + NADP(+) + H(+). It catalyses the reaction 2 nitric oxide + NADH + 2 O2 = 2 nitrate + NAD(+) + H(+). Its function is as follows. Is involved in NO detoxification in an aerobic process, termed nitric oxide dioxygenase (NOD) reaction that utilizes O(2) and NAD(P)H to convert NO to nitrate, which protects the bacterium from various noxious nitrogen compounds. Therefore, plays a central role in the inducible response to nitrosative stress. The chain is Flavohemoprotein from Halalkalibacterium halodurans (strain ATCC BAA-125 / DSM 18197 / FERM 7344 / JCM 9153 / C-125) (Bacillus halodurans).